A 339-amino-acid chain; its full sequence is Uroporphyrinogen decarboxylase (339 aa).

Substrate contacts are provided by residues 21–25 (RQAGR), aspartate 71, tyrosine 147, serine 202, and histidine 315.

Belongs to the uroporphyrinogen decarboxylase family. Homodimer.

The protein localises to the cytoplasm. The catalysed reaction is uroporphyrinogen III + 4 H(+) = coproporphyrinogen III + 4 CO2. Its pathway is porphyrin-containing compound metabolism; protoporphyrin-IX biosynthesis; coproporphyrinogen-III from 5-aminolevulinate: step 4/4. Functionally, catalyzes the decarboxylation of four acetate groups of uroporphyrinogen-III to yield coproporphyrinogen-III. The sequence is that of Uroporphyrinogen decarboxylase from Helicobacter pylori (strain G27).